Here is a 368-residue protein sequence, read N- to C-terminus: Polymerase delta-interacting protein 2 (368 aa).

The N-terminal 21 residues, 1 to 21 (MAGCVARRALAVGSRWWSRSL), are a transit peptide targeting the mitochondrion. Residues 235–360 (RETTENIRVT…FSLESNKDEK (126 aa)) enclose the ApaG domain. A Phosphothreonine modification is found at Thr-292.

Interacts with PCNA and POLD2. Interacts with SSBP1. Interacts with PRIMPOL; leading to enhance DNA polymerase activity of PRIMPOL. Interacts with POLH. Interacts with POLD1; leading to stimulate DNA polymerase activity of POLD1.

It localises to the mitochondrion matrix. Its subcellular location is the nucleus. Functionally, involved in DNA damage tolerance by regulating translesion synthesis (TLS) of templates carrying DNA damage lesions such as 8oxoG and abasic sites. May act by stimulating activity of DNA polymerases involved in TLS, such as PRIMPOL and polymerase delta (POLD1). In Mus musculus (Mouse), this protein is Polymerase delta-interacting protein 2.